Reading from the N-terminus, the 709-residue chain is DNA ligase (709 aa).

A disordered region spans residues 1 to 20 (MTATHRGAQADASAPAGPLP). NAD(+) is bound by residues 52-56 (DAEYD), 101-102 (SL), and glutamate 146. Lysine 148 acts as the N6-AMP-lysine intermediate in catalysis. Residues arginine 169, glutamate 205, lysine 322, and lysine 346 each coordinate NAD(+). Zn(2+) contacts are provided by cysteine 440, cysteine 443, cysteine 458, and cysteine 464. Residues 623–709 (KAPAPLSGKT…AEAGAAPAQE (87 aa)) enclose the BRCT domain.

The protein belongs to the NAD-dependent DNA ligase family. LigA subfamily. Mg(2+) serves as cofactor. The cofactor is Mn(2+).

The enzyme catalyses NAD(+) + (deoxyribonucleotide)n-3'-hydroxyl + 5'-phospho-(deoxyribonucleotide)m = (deoxyribonucleotide)n+m + AMP + beta-nicotinamide D-nucleotide.. DNA ligase that catalyzes the formation of phosphodiester linkages between 5'-phosphoryl and 3'-hydroxyl groups in double-stranded DNA using NAD as a coenzyme and as the energy source for the reaction. It is essential for DNA replication and repair of damaged DNA. The polypeptide is DNA ligase (Cupriavidus necator (strain ATCC 17699 / DSM 428 / KCTC 22496 / NCIMB 10442 / H16 / Stanier 337) (Ralstonia eutropha)).